A 151-amino-acid polypeptide reads, in one-letter code: Regulatory protein RecX (151 aa).

The protein belongs to the RecX family.

The protein resides in the cytoplasm. Modulates RecA activity. This chain is Regulatory protein RecX, found in Herminiimonas arsenicoxydans.